The primary structure comprises 335 residues: Auxin-responsive protein IAA6 (335 aa).

The EAR-like (transcriptional repression) signature appears at 51–55 (LKLGL). Disordered stretches follow at residues 81 to 102 (LSFF…GAKR), 143 to 180 (KKGC…VGWP), and 188 to 207 (NLAS…DNAN). A PB1 domain is found at 217–321 (NPLVKINMDG…TAKRLRVLRS (105 aa)).

It belongs to the Aux/IAA family. As to quaternary structure, homodimers and heterodimers. Highly expressed in roots. Expressed in shoots and flowers.

The protein localises to the nucleus. Its function is as follows. Aux/IAA proteins are short-lived transcriptional factors that function as repressors of early auxin response genes at low auxin concentrations. This chain is Auxin-responsive protein IAA6 (IAA6), found in Oryza sativa subsp. japonica (Rice).